Consider the following 694-residue polypeptide: ATP-dependent RNA helicase DHX33 (694 aa).

Residues 78-246 (LKELEANDTV…FNCKGMYLEG (169 aa)) enclose the Helicase ATP-binding domain. 91-98 (SETGSGKT) is an ATP binding site. Positions 188–191 (DEAH) match the DEAH box motif. One can recognise a Helicase C-terminal domain in the interval 270–443 (TLFHIHRTTP…SMVLQLLALD (174 aa)).

Belongs to the DEAD box helicase family. DEAH subfamily.

Its subcellular location is the nucleus. The protein localises to the nucleolus. The catalysed reaction is ATP + H2O = ADP + phosphate + H(+). Part of a translational control module, also containing pths/DDX47 and ais/DDX52, which coordinates germline stem cell differentiation with ribosome biogenesis during oogenesis. This module allows for coregulation of ribosomal proteins and non1/GTPBP4, a p53 repressor, preventing p53 stabilization, cell cycle arrest and loss of stem cell differentiation. The polypeptide is ATP-dependent RNA helicase DHX33 (Drosophila melanogaster (Fruit fly)).